We begin with the raw amino-acid sequence, 234 residues long: Iron-sulfur cluster co-chaperone protein HscB (234 aa).

Residues cysteine 40, cysteine 43, cysteine 57, and cysteine 60 each contribute to the a divalent metal cation site. Residues 71-143 (DYFSLMNCNR…LTRGLYLLKL (73 aa)) enclose the J domain.

This sequence belongs to the HscB family. Interacts with ISCU and HSPA9 to form an iron-sulfur transfer complex. Interacts with SDHAF1 (via the first LYR motif); the interaction recruits the iron-sulfur transfer complex composed of HSC20, HSPA9 and ISCU and mediates the incorporation of iron-sulfur clusters into SDHB which also interacts with HSC20. Interacts with the cytoplasmic form of ISCU and with CIA complex member CIAO1 (via LYR motif). As to quaternary structure, homodimer. Interacts with ISCU (cytoplasmic form); this interaction stabilizes the (Fe-S) clusters on ISCU. Interacts with the CIA complex member CIAO1 (via LYR motif).

It localises to the cytoplasm. Its subcellular location is the mitochondrion. The protein operates within cofactor biosynthesis; iron-sulfur cluster biosynthesis. Functionally, acts as a co-chaperone in iron-sulfur cluster assembly in mitochondria. Required for incorporation of iron-sulfur clusters into SDHB, the iron-sulfur protein subunit of succinate dehydrogenase that is involved in complex II of the mitochondrial electron transport chain. Recruited to SDHB by interaction with SDHAF1 which first binds SDHB and then recruits the iron-sulfur transfer complex formed by HSC20, HSPA9 and ISCU through direct binding to HSC20. Plays an essential role in hematopoiesis. Acts as a co-chaperone in iron-sulfur cluster assembly in the cytoplasm. Also mediates complex formation between components of the cytosolic iron-sulfur biogenesis pathway and the CIA targeting complex composed of CIAO1, DIPK1B/FAM69B and MMS19 by binding directly to the scaffold protein ISCU and to CIAO1. This facilitates iron-sulfur cluster insertion into a number of cytoplasmic and nuclear proteins including POLD1, ELP3, DPYD and PPAT. In Mus musculus (Mouse), this protein is Iron-sulfur cluster co-chaperone protein HscB.